A 236-amino-acid polypeptide reads, in one-letter code: MDWKTSEMLFPFPVYMAPLTSKFAAYKKKIANWLTVYRIFIALPTIIFIALDNQLGVLANFSVGAISISLQISLLIGGFLFLTAVISDYLDGYLARKWLAVSNFGKLWDPIADKVIINGVLIALAINGYFHFSLLIVFIVRDLVLDGMRIYAYEKKVVIAANWLGKWKTIMQMVGIVFSCFVWSFKQSEIASLNSGLFFWLLTQLPYYLAAVFSIWSFIVYNIQIYQQLKAYNSKL.

A run of 5 helical transmembrane segments spans residues 39–59, 66–86, 120–140, 163–183, and 196–216; these read IFIA…GVLA, ISIS…TAVI, VLIA…VFIV, WLGK…CFVW, and GLFF…FSIW.

Belongs to the CDP-alcohol phosphatidyltransferase class-I family.

It is found in the cell membrane. The catalysed reaction is a CDP-1,2-diacyl-sn-glycerol + sn-glycerol 3-phosphate = a 1,2-diacyl-sn-glycero-3-phospho-(1'-sn-glycero-3'-phosphate) + CMP + H(+). The protein operates within phospholipid metabolism; phosphatidylglycerol biosynthesis; phosphatidylglycerol from CDP-diacylglycerol: step 1/2. Its function is as follows. This protein catalyzes the committed step to the synthesis of the acidic phospholipids. This chain is CDP-diacylglycerol--glycerol-3-phosphate 3-phosphatidyltransferase (pgsA), found in Mycoplasma genitalium (strain ATCC 33530 / DSM 19775 / NCTC 10195 / G37) (Mycoplasmoides genitalium).